The chain runs to 83 residues: Protein TrbG (83 aa).

The polypeptide is Protein TrbG (trbG) (Escherichia coli (strain K12)).